The primary structure comprises 212 residues: Dephospho-CoA kinase (212 aa).

One can recognise a DPCK domain in the interval 3 to 204 (ILGLTGSIGM…GSRPAAPVGG (202 aa)). Position 11–16 (11–16 (GMGKST)) interacts with ATP.

It belongs to the CoaE family.

Its subcellular location is the cytoplasm. The enzyme catalyses 3'-dephospho-CoA + ATP = ADP + CoA + H(+). It participates in cofactor biosynthesis; coenzyme A biosynthesis; CoA from (R)-pantothenate: step 5/5. Catalyzes the phosphorylation of the 3'-hydroxyl group of dephosphocoenzyme A to form coenzyme A. In Paramagnetospirillum magneticum (strain ATCC 700264 / AMB-1) (Magnetospirillum magneticum), this protein is Dephospho-CoA kinase.